The following is a 91-amino-acid chain: Small ribosomal subunit protein uS15 (91 aa).

This sequence belongs to the universal ribosomal protein uS15 family. In terms of assembly, part of the 30S ribosomal subunit. Forms a bridge to the 50S subunit in the 70S ribosome, contacting the 23S rRNA.

Its function is as follows. One of the primary rRNA binding proteins, it binds directly to 16S rRNA where it helps nucleate assembly of the platform of the 30S subunit by binding and bridging several RNA helices of the 16S rRNA. Functionally, forms an intersubunit bridge (bridge B4) with the 23S rRNA of the 50S subunit in the ribosome. In Rickettsia bellii (strain OSU 85-389), this protein is Small ribosomal subunit protein uS15.